A 1212-amino-acid polypeptide reads, in one-letter code: MRSRNQGGESSSNGHVSCPKSSIISSDGGKGPSEDAKKNKANRKEEDVMASGTIKRHLKPSGESEKKTKKSVELSKEDLIQLLSIMEGELQAREDVIHMLRTEKTKPEVLEAHYGSAEPEKVLRVLHRDAILAQEKSIGEDVYEKPISELDRLEEKQKETYRRMLEQLLLAEKCHRRTVYELENEKHKHTDYMNKSDDFTNLLEQERERLKKLLEQEKAYQARKEKENAKRLNKLRDELVKLKSFALMLVDERQMHIEQLGLQSQKVQDLTQKLREEEEKLKAVTYKSKEDRQKLLKLEVDFEHKASRFSQEHEEMNAKLANQESHNRQLRLKLVGLSQRIEELEETNKSLQKAEEELQELREKIAKGECGNSSLMAEVESLRKRVLEMEGKDEEITKTEAQCRELKKKLQEEEHHSKELRLEVEKLQKRMSELEKLEEAFSRSKSECTQLHLNLEKEKNLTKDLLNELEVVKSRVKELECSESRLEKAELSLKDDLTKLKSFTVMLVDERKNMMEKIKQEERKVDGLNKNFKVEQGKVMDVTEKLIEESKKLLKLKSEMEEKEYSLTKERDELMGKLRSEEERSCELSCSVDLLKKRLDGIEEVEREINRGRSCKGSEFTCPEDNKIRELTLEIERLKKRLQQLEVVEGDLMKTEDEYDQLEQKFRTEQDKANFLSQQLEEIKHQMAKHKAIEKGEAVSQEAELRHRFRLEEAKSRDLQAEVQALKEKIHELMNKEDQLSQLQVDYSVLQQRFMEEETKNKNMGREVLNLTKELELSKRYSRALRPSGNGRRMVDVPVASTGVQTEAVCGDAAEEETPAVFIRKSFQEENHIMSNLRQVGLKKPMERSSVLDRYPPAANELTMRKSWIPWMRKRENGPSTPQEKGPRPNQGAGHPGELVLAPKQGQPLHIRVTPDHENSTATLEITSPTSEEFFSSTTVIPTLGNQKPRITIIPSPNVMSQKPKSADPTLGPERAMSPVTITTISREKSPEGGRSAFADRPASPIQIMTVSTSAAPTEIAVSPESQEVPMGRTILKVTPEKQTVPAPVRKYNSNANIITTEDNKIHIHLGSQFKRSPGPAAEGVSPVITVRPVNVTAEKEVSTGTVLRSPRNHLSSRPGASKVTSTITITPVTTSSTRGTQSVSGQDGSSQRPTPTRIPMSKGMKAGKPVVAASGAGNLTKFQPRAETQSMKIELKKSAASSTASLGGGKG.

A compositionally biased stretch (polar residues) spans 1-15; it reads MRSRNQGGESSSNGH. The tract at residues 1–73 is disordered; the sequence is MRSRNQGGES…SEKKTKKSVE (73 aa). 2 stretches are compositionally biased toward basic and acidic residues: residues 32–47 and 60–73; these read PSEDAKKNKANRKEED and PSGESEKKTKKSVE. Residue S137 is modified to Phosphoserine. Coiled coils occupy residues 191–575 and 623–777; these read DYMN…DELM and PEDN…ELEL. Disordered stretches follow at residues 871 to 898 and 948 to 975; these read WMRKRENGPSTPQEKGPRPNQGAGHPGE and KPRITIIPSPNVMSQKPKSADPTLGPER. S978 carries the phosphoserine modification. The tract at residues 1102–1190 is disordered; sequence VSTGTVLRSP…TKFQPRAETQ (89 aa). A compositionally biased stretch (low complexity) spans 1124-1138; it reads VTSTITITPVTTSST. A compositionally biased stretch (polar residues) spans 1139-1155; it reads RGTQSVSGQDGSSQRPT.

The protein belongs to the FILIP1 family. In terms of assembly, interacts with FLNA. Interacts with RHOD (in GTP-bound form). As to expression, expressed in muscle tissue, including heart. Found in cortical ventricular zone.

It is found in the cytoplasm. It localises to the cytoskeleton. The protein localises to the stress fiber. In terms of biological role, by acting through a filamin-A/F-actin axis, it controls the start of neocortical cell migration from the ventricular zone. May be able to induce the degradation of Filamin A. This is Filamin-A-interacting protein 1 (Filip1) from Rattus norvegicus (Rat).